We begin with the raw amino-acid sequence, 87 residues long: MVLVNFFFFRKKTPADIAKKRLQEIVSDHNIRNNFAPYFLPQLKKDLVQTISKYIHNPRILSIQLEKKDNNTSILKCKIIFFNEETQ.

It belongs to the MinE family.

Functionally, prevents the cell division inhibition by proteins MinC and MinD at internal division sites while permitting inhibition at polar sites. This ensures cell division at the proper site by restricting the formation of a division septum at the midpoint of the long axis of the cell. The sequence is that of Cell division topological specificity factor from Blochmanniella pennsylvanica (strain BPEN).